Reading from the N-terminus, the 145-residue chain is Superoxide dismutase [Mn/Fe] (145 aa).

The Fe(3+) site is built by His10 and His64. Positions 10 and 64 each coordinate Mn(2+).

This sequence belongs to the iron/manganese superoxide dismutase family. Requires Mn(2+) as cofactor. It depends on Fe(3+) as a cofactor.

It carries out the reaction 2 superoxide + 2 H(+) = H2O2 + O2. Destroys superoxide anion radicals which are normally produced within the cells and which are toxic to biological systems. Catalyzes the dismutation of superoxide anion radicals into O2 and H2O2 by successive reduction and oxidation of the transition metal ion at the active site. This chain is Superoxide dismutase [Mn/Fe] (sodA), found in Streptococcus canis.